Reading from the N-terminus, the 194-residue chain is Acireductone dioxygenase 1 (194 aa).

The disordered stretch occupies residues 1-21 (MEAWYMDDSADDQRKPHHRSP). Fe(2+)-binding residues include histidine 87, histidine 89, glutamate 93, and histidine 132. Residues histidine 87, histidine 89, glutamate 93, and histidine 132 each coordinate Ni(2+).

It belongs to the acireductone dioxygenase (ARD) family. Fe(2+) serves as cofactor. Ni(2+) is required as a cofactor.

The protein resides in the cytoplasm. It is found in the nucleus. It catalyses the reaction 1,2-dihydroxy-5-(methylsulfanyl)pent-1-en-3-one + O2 = 4-methylsulfanyl-2-oxobutanoate + formate + 2 H(+). The enzyme catalyses 1,2-dihydroxy-5-(methylsulfanyl)pent-1-en-3-one + O2 = 3-(methylsulfanyl)propanoate + CO + formate + 2 H(+). It participates in amino-acid biosynthesis; L-methionine biosynthesis via salvage pathway; L-methionine from S-methyl-5-thio-alpha-D-ribose 1-phosphate: step 5/6. Functionally, catalyzes 2 different reactions between oxygen and the acireductone 1,2-dihydroxy-3-keto-5-methylthiopentene (DHK-MTPene) depending upon the metal bound in the active site. Fe-containing acireductone dioxygenase (Fe-ARD) produces formate and 2-keto-4-methylthiobutyrate (KMTB), the alpha-ketoacid precursor of methionine in the methionine recycle pathway. Ni-containing acireductone dioxygenase (Ni-ARD) produces methylthiopropionate, carbon monoxide and formate, and does not lie on the methionine recycle pathway. In Physcomitrium patens (Spreading-leaved earth moss), this protein is Acireductone dioxygenase 1.